A 473-amino-acid polypeptide reads, in one-letter code: Probable lipid II flippase MurJ (473 aa).

13 helical membrane-spanning segments follow: residues 31 to 51, 90 to 110, 125 to 145, 153 to 173, 177 to 197, 215 to 235, 253 to 273, 300 to 320, 327 to 347, 360 to 380, 382 to 402, 414 to 434, and 439 to 459; these read TFGASSTLDAYYVSIVFPFFL, LVTLLIVFLSEVFPYFMASIF, LIRLTAPFITIVFVWAVFYSV, FLPALTPMFSNVGVIVGCLFG, WAAAGFTIGGLAALLVLLPFG, FFGTFMTMAVSQVTTLIDVNV, LYQLPLGIFGVAVSTVALSTL, IGLMALSERIISLLFGYGAFT, SAQILFMYAIGLCFVSLFNLL, PFFATLLVSAVNISLDVILGF, MGASGIALATSVSYIAGFVFL, IFKISLASAVMGTVILLLRGS, and LGTIFLVLIGVFVYVLFSKLL.

Belongs to the MurJ/MviN family.

It localises to the cell inner membrane. Its pathway is cell wall biogenesis; peptidoglycan biosynthesis. In terms of biological role, involved in peptidoglycan biosynthesis. Transports lipid-linked peptidoglycan precursors from the inner to the outer leaflet of the cytoplasmic membrane. This is Probable lipid II flippase MurJ from Thermotoga maritima (strain ATCC 43589 / DSM 3109 / JCM 10099 / NBRC 100826 / MSB8).